The chain runs to 356 residues: Adenine deaminase (356 aa).

Zn(2+) contacts are provided by histidine 23, histidine 25, and histidine 211. The Proton donor role is filled by glutamate 214. Position 292 (aspartate 292) interacts with Zn(2+). Residue aspartate 293 coordinates substrate.

The protein belongs to the metallo-dependent hydrolases superfamily. Adenosine and AMP deaminases family. Adenine deaminase type 2 subfamily. The cofactor is Zn(2+).

It is found in the cytoplasm. Its subcellular location is the nucleus. It catalyses the reaction adenine + H2O + H(+) = hypoxanthine + NH4(+). In terms of biological role, catalyzes the hydrolytic deamination of adenine to hypoxanthine. Plays an important role in the purine salvage pathway and in nitrogen catabolism. The protein is Adenine deaminase of Candida albicans (strain SC5314 / ATCC MYA-2876) (Yeast).